Consider the following 154-residue polypeptide: Lipoprotein signal peptidase (154 aa).

The next 2 helical transmembrane spans lie at 52–72 (ILAG…IGIV) and 85–105 (LGVA…DRAV). Residues Asp-111 and Asp-129 contribute to the active site. Residues 124-144 (IFNIADSSLCVGVMLLFIQML) form a helical membrane-spanning segment.

The protein belongs to the peptidase A8 family.

It is found in the cell membrane. The catalysed reaction is Release of signal peptides from bacterial membrane prolipoproteins. Hydrolyzes -Xaa-Yaa-Zaa-|-(S,diacylglyceryl)Cys-, in which Xaa is hydrophobic (preferably Leu), and Yaa (Ala or Ser) and Zaa (Gly or Ala) have small, neutral side chains.. The protein operates within protein modification; lipoprotein biosynthesis (signal peptide cleavage). Functionally, this protein specifically catalyzes the removal of signal peptides from prolipoproteins. This is Lipoprotein signal peptidase from Bacillus subtilis (strain 168).